The following is a 523-amino-acid chain: FAD-dependent monooxygenase drtC (523 aa).

In terms of domain architecture, FAD-binding PCMH-type spans Thr-77–Gln-252.

Belongs to the oxygen-dependent FAD-linked oxidoreductase family. Requires FAD as cofactor.

Its pathway is secondary metabolite biosynthesis; terpenoid biosynthesis. Its function is as follows. FAD-dependent monooxygenase; part of the gene cluster that mediates the biosynthesis of various drimane-type sesquiterpene esters, compounds that exhibit diverse biological activities and are widely present in eukaryotes. The pathway begins with the synthesis of the backbone drimenol by the terpene cyclase drtB using farnesyl pyrophosphate (FPP) as substrate. The cytochrome P450 monooxygenase drtD is then responsible for the hydroxylations at C-6, C-9 and C-12, as well as the oxidation of hydroxyl groups at C-6 and C-11 to a ketone and an aldehyde, respectively. Then, the biosynthesis can go in two directions, either the hydroxylated drimenol is further hydroxylated at C-2 and C-3 by an enzyme(s) not associated with the drt cluster, or the FAD-binding oxidoreductase drtC further oxidizes C-11 or C-12 to form the butyrolactone ring. DrtB, drtD and drtC are solely responsible for the formation of the different drimane structures observed during drimane sesquiterpenes biosynthesis. The polyketide synthase drtA synthesizes different lengths (C6 and C8) of PKS chains, which are then oxidized to varying degrees by the short-chain dehydrogenase drtF. Finally, these PKS chains are transferred onto drimane sesquiterpenes by the acyltransferase drtE, forming the sesquiterpene esters. In addition to the different fatty acyl-CoA chains produced by drtA, drtE is also able to use cinnamoyl-CoA as a substrate. This is FAD-dependent monooxygenase drtC from Aspergillus calidoustus.